We begin with the raw amino-acid sequence, 444 residues long: N-succinylarginine dihydrolase (444 aa).

Substrate is bound by residues 19–28 (AGLSFGNVAS), N110, and 137–138 (HR). E174 is a catalytic residue. R214 contributes to the substrate binding site. Residue H250 is part of the active site. Residues D252 and N362 each contribute to the substrate site. C368 acts as the Nucleophile in catalysis.

The protein belongs to the succinylarginine dihydrolase family. Homodimer.

It catalyses the reaction N(2)-succinyl-L-arginine + 2 H2O + 2 H(+) = N(2)-succinyl-L-ornithine + 2 NH4(+) + CO2. Its pathway is amino-acid degradation; L-arginine degradation via AST pathway; L-glutamate and succinate from L-arginine: step 2/5. Its function is as follows. Catalyzes the hydrolysis of N(2)-succinylarginine into N(2)-succinylornithine, ammonia and CO(2). This is N-succinylarginine dihydrolase from Shewanella amazonensis (strain ATCC BAA-1098 / SB2B).